Here is a 421-residue protein sequence, read N- to C-terminus: uncharacterized protein (421 aa).

This is an uncharacterized protein from Acanthamoeba polyphaga (Amoeba).